A 344-amino-acid chain; its full sequence is tRNA(Ile)-lysidine synthase (344 aa).

35 to 40 serves as a coordination point for ATP; it reads SGGPDS.

It belongs to the tRNA(Ile)-lysidine synthase family.

It is found in the cytoplasm. It catalyses the reaction cytidine(34) in tRNA(Ile2) + L-lysine + ATP = lysidine(34) in tRNA(Ile2) + AMP + diphosphate + H(+). Its function is as follows. Ligates lysine onto the cytidine present at position 34 of the AUA codon-specific tRNA(Ile) that contains the anticodon CAU, in an ATP-dependent manner. Cytidine is converted to lysidine, thus changing the amino acid specificity of the tRNA from methionine to isoleucine. In Methylobacterium sp. (strain 4-46), this protein is tRNA(Ile)-lysidine synthase.